The chain runs to 857 residues: Leucine--tRNA ligase (857 aa).

A 'HIGH' region motif is present at residues 42 to 52; sequence PYPSGRLHMGH. The 'KMSKS' region motif lies at 617–621; sequence KMSKS. Lys-620 lines the ATP pocket.

This sequence belongs to the class-I aminoacyl-tRNA synthetase family.

Its subcellular location is the cytoplasm. It carries out the reaction tRNA(Leu) + L-leucine + ATP = L-leucyl-tRNA(Leu) + AMP + diphosphate. The sequence is that of Leucine--tRNA ligase from Vibrio vulnificus (strain CMCP6).